The primary structure comprises 154 residues: MKKITNNVTIWIKPKTVEKKWYLIDAADRVLGKVAVDVVRILRGKHKAYYTPHQDLGDNVIIINASKVRLTGKKHQQKLYYRHSRYPGGLYSDTFKTLSERKPCAPLEIAIKGMLPKGPLGRDLFRNLKVFSGSEHTLKAQNPIKLEANLREVK.

Belongs to the universal ribosomal protein uL13 family. As to quaternary structure, part of the 50S ribosomal subunit.

In terms of biological role, this protein is one of the early assembly proteins of the 50S ribosomal subunit, although it is not seen to bind rRNA by itself. It is important during the early stages of 50S assembly. This chain is Large ribosomal subunit protein uL13, found in Borrelia garinii subsp. bavariensis (strain ATCC BAA-2496 / DSM 23469 / PBi) (Borreliella bavariensis).